The primary structure comprises 271 residues: Mannosyl-3-phosphoglycerate phosphatase (271 aa).

The active-site Nucleophile is D13. Residues D13, D15, and D214 each coordinate Mg(2+).

Belongs to the HAD-like hydrolase superfamily. MPGP family. Mg(2+) serves as cofactor.

The protein localises to the cytoplasm. It catalyses the reaction 2-O-(alpha-D-mannosyl)-3-phosphoglycerate + H2O = (2R)-2-O-(alpha-D-mannosyl)-glycerate + phosphate. This Escherichia coli (strain K12 / DH10B) protein is Mannosyl-3-phosphoglycerate phosphatase.